A 903-amino-acid polypeptide reads, in one-letter code: DNA mismatch repair protein MutS (903 aa).

Position 655–662 (655–662 (GPNMAGKS)) interacts with ATP.

Belongs to the DNA mismatch repair MutS family.

This protein is involved in the repair of mismatches in DNA. It is possible that it carries out the mismatch recognition step. This protein has a weak ATPase activity. This chain is DNA mismatch repair protein MutS, found in Caulobacter vibrioides (strain ATCC 19089 / CIP 103742 / CB 15) (Caulobacter crescentus).